The following is a 319-amino-acid chain: rRNA adenine N-6-methyltransferase (319 aa).

The interval 1–59 is disordered; that stretch reads MARAPRSPHPARSRETSRAHPPYGTRADRAPGRGRDRDRSPDSPGNTSSRDGGRSPDRA. Residues 26–41 are compositionally biased toward basic and acidic residues; the sequence is RADRAPGRGRDRDRSP. Asn-66, Leu-68, Gly-93, Glu-114, Asp-141, and Asn-157 together coordinate S-adenosyl-L-methionine.

The protein belongs to the class I-like SAM-binding methyltransferase superfamily. rRNA adenine N(6)-methyltransferase family.

The catalysed reaction is adenosine(2085) in 23S rRNA + 2 S-adenosyl-L-methionine = N(6)-dimethyladenosine(2085) in 23S rRNA + 2 S-adenosyl-L-homocysteine + 2 H(+). This protein produces a dimethylation of the adenine residue at position 2085 in 23S rRNA, resulting in reduced affinity between ribosomes and macrolide-lincosamide-streptogramin B antibiotics. In Streptomyces fradiae (Streptomyces roseoflavus), this protein is rRNA adenine N-6-methyltransferase (ermSF).